Here is a 170-residue protein sequence, read N- to C-terminus: Macro domain-containing protein DR_2288 (170 aa).

The 170-residue stretch at 1–170 folds into the Macro domain; sequence MPLELVQGDI…HVFERALAQL (170 aa).

Belongs to the MacroD-type family.

This is Macro domain-containing protein DR_2288 from Deinococcus radiodurans (strain ATCC 13939 / DSM 20539 / JCM 16871 / CCUG 27074 / LMG 4051 / NBRC 15346 / NCIMB 9279 / VKM B-1422 / R1).